The primary structure comprises 906 residues: Formin-like protein 16 (906 aa).

An N-terminal signal peptide occupies residues 1–28; that stretch reads MAPAPSPTPLPLFLLLLLLVGVAPLAAA. The segment at 34–76 is disordered; the sequence is QTRFPSTRTPAFATPPPITSPSPSPGTPTATPSSSPPSSSGKR. Residues 46-59 are compositionally biased toward pro residues; sequence ATPPPITSPSPSPG. Residues 60 to 73 are compositionally biased toward low complexity; the sequence is TPTATPSSSPPSSS. Residues 81–101 form a helical membrane-spanning segment; sequence VAVVSTALSSFAVSGLAFFLF. Disordered stretches follow at residues 113 to 149, 161 to 223, 250 to 404, 451 to 474, 677 to 702, and 834 to 906; these read AGGA…VDEN, KEGD…SLDS, AYAR…DQQA, RKTK…GRSN, GSLA…REER, and LQQQ…SDEE. A compositionally biased stretch (gly residues) spans 114–128; it reads GGAGQHYGGAQGGAL. Positions 174–185 are enriched in pro residues; the sequence is SRRPPQPPPPRP. The segment covering 186–196 has biased composition (basic and acidic residues); sequence YRAERRQDAHE. Pro residues predominate over residues 270–294; the sequence is SPSPAPAPAARPASPSPSLPLPPGR. Residues 295–310 are compositionally biased toward low complexity; sequence ESPSRPQSIAAAAVAS. Over residues 311–383 the composition is skewed to pro residues; sequence PAPPPPPPPK…KGGPPPPPPK (73 aa). The 454-residue stretch at 396-849 folds into the FH2 domain; the sequence is PTGSADQQAK…PTPPPSSSQP (454 aa). Polar residues-rich tracts occupy residues 463–474 and 677–697; these read GGSTSAGLGRSN and GSLA…SQGP. Residues 847–866 are compositionally biased toward low complexity; it reads SQPAAPAATTKGAADDAPAP.

The protein belongs to the formin-like family. Class-I subfamily.

Its subcellular location is the membrane. This Oryza sativa subsp. japonica (Rice) protein is Formin-like protein 16 (FH16).